We begin with the raw amino-acid sequence, 245 residues long: Alpha carbonic anhydrase 2 (245 aa).

An N-terminal signal peptide occupies residues 1-23 (MDKISIRCFIFLVLTSFVTTVSC). The Alpha-carbonic anhydrase domain occupies 37–245 (HEFSYEWNQE…THRYFLLFFT (209 aa)). A disulfide bond links Cys-62 and Cys-222. N-linked (GlcNAc...) asparagine glycosylation is present at Asn-95. Catalysis depends on His-103, which acts as the Proton acceptor. N-linked (GlcNAc...) asparagine glycosylation occurs at Asn-120. Residues His-130, His-132, and His-149 each contribute to the Zn(2+) site. Asn-156 carries an N-linked (GlcNAc...) asparagine glycan. 218–219 (TT) serves as a coordination point for substrate.

It belongs to the alpha-class carbonic anhydrase family. Zn(2+) serves as cofactor. Post-translationally, N-glycosylated. As to expression, expressed in stems and roots.

The protein resides in the plastid. Its subcellular location is the chloroplast stroma. The enzyme catalyses hydrogencarbonate + H(+) = CO2 + H2O. Reversible hydration of carbon dioxide. The sequence is that of Alpha carbonic anhydrase 2 (ACA2) from Arabidopsis thaliana (Mouse-ear cress).